We begin with the raw amino-acid sequence, 360 residues long: Plastid lipid-associated protein 3, chloroplastic (360 aa).

The segment covering 1–37 (MATLFTVTTTSRPFPANPSKTFSPSISLKPNALSFSL) has biased composition (polar residues). The transit peptide at 1-52 (MATLFTVTTTSRPFPANPSKTFSPSISLKPNALSFSLTHHRPPRPLRFSKIR) directs the protein to the chloroplast. A disordered region spans residues 1-130 (MATLFTVTTT…EWEEREADDG (130 aa)). Basic residues predominate over residues 38 to 50 (THHRPPRPLRFSK). Over residues 53–68 (SSLPSESDSEPEGGYS) the composition is skewed to low complexity. Acidic residues predominate over residues 117 to 127 (TNEDEWEEREA).

Belongs to the PAP/fibrillin family. In terms of tissue distribution, ubiquitous expression among various organs, but only at a very low level.

It is found in the plastid. Its subcellular location is the chloroplast. This chain is Plastid lipid-associated protein 3, chloroplastic (PAP3), found in Brassica campestris (Field mustard).